Here is a 366-residue protein sequence, read N- to C-terminus: Protein sigma-NS (366 aa).

Positions 1–11 are important for ssRNA-binding and formation of complexes; it reads MASSLRAAISK.

This sequence belongs to the orthoreovirus sigma-NS protein family. In terms of assembly, homooligomer; in presence of RNA. Interacts with protein mu-NS; this interaction allows the localization of sigma-NS to the viral factories. Interacts with host G3BP1 (via C-terminus); this interaction induces the relocalization of G3BP1 and other SG proteins to the viral factories periphery.

It is found in the host cytoplasm. In terms of biological role, protein that binds to ssRNA and participates with protein mu-NS in forming the matrix of viral factories, which are large inclusions in the host cytoplasm where replication intermediates are assembled and viral RNA replication takes place. Plays a role in the inhibition of the integrated stress response (ISR) to escape from host cell translational shutoff. Participates in the disruption of stress granules (SG) through its association with host G3BP1 and mu-NS. The sequence is that of Protein sigma-NS (S3) from Mammalia (T1L).